A 368-amino-acid polypeptide reads, in one-letter code: Alkaline phosphatase L (368 aa).

An N-terminal signal peptide occupies residues 1–23 (MFKRSLIAASLSVAALVSAQAMA).

It belongs to the PstS family. Homodimer.

It is found in the secreted. The protein localises to the periplasm. It carries out the reaction a phosphate monoester + H2O = an alcohol + phosphate. In terms of biological role, has both a phosphomonoesterase and phosphodiesterase activity. This chain is Alkaline phosphatase L, found in Pseudomonas aeruginosa (strain ATCC 15692 / DSM 22644 / CIP 104116 / JCM 14847 / LMG 12228 / 1C / PRS 101 / PAO1).